A 653-amino-acid polypeptide reads, in one-letter code: tRNA 5-methylaminomethyl-2-thiouridine biosynthesis bifunctional protein MnmC (653 aa).

The interval methionine 1–alanine 236 is tRNA (mnm(5)s(2)U34)-methyltransferase. Positions isoleucine 260–glycine 653 are FAD-dependent cmnm(5)s(2)U34 oxidoreductase.

This sequence in the N-terminal section; belongs to the methyltransferase superfamily. tRNA (mnm(5)s(2)U34)-methyltransferase family. The protein in the C-terminal section; belongs to the DAO family. FAD serves as cofactor.

The protein resides in the cytoplasm. It carries out the reaction 5-aminomethyl-2-thiouridine(34) in tRNA + S-adenosyl-L-methionine = 5-methylaminomethyl-2-thiouridine(34) in tRNA + S-adenosyl-L-homocysteine + H(+). Catalyzes the last two steps in the biosynthesis of 5-methylaminomethyl-2-thiouridine (mnm(5)s(2)U) at the wobble position (U34) in tRNA. Catalyzes the FAD-dependent demodification of cmnm(5)s(2)U34 to nm(5)s(2)U34, followed by the transfer of a methyl group from S-adenosyl-L-methionine to nm(5)s(2)U34, to form mnm(5)s(2)U34. The protein is tRNA 5-methylaminomethyl-2-thiouridine biosynthesis bifunctional protein MnmC of Burkholderia vietnamiensis (strain G4 / LMG 22486) (Burkholderia cepacia (strain R1808)).